The sequence spans 330 residues: Biotin synthase (330 aa).

The Radical SAM core domain occupies 42 to 268 (YYGRKVKLNM…INPSKEIRIA (227 aa)). 3 residues coordinate [4Fe-4S] cluster: Cys-60, Cys-64, and Cys-67. The [2Fe-2S] cluster site is built by Cys-103, Cys-136, Cys-196, and Arg-266.

This sequence belongs to the radical SAM superfamily. Biotin synthase family. As to quaternary structure, homodimer. [4Fe-4S] cluster serves as cofactor. It depends on [2Fe-2S] cluster as a cofactor.

The catalysed reaction is (4R,5S)-dethiobiotin + (sulfur carrier)-SH + 2 reduced [2Fe-2S]-[ferredoxin] + 2 S-adenosyl-L-methionine = (sulfur carrier)-H + biotin + 2 5'-deoxyadenosine + 2 L-methionine + 2 oxidized [2Fe-2S]-[ferredoxin]. The protein operates within cofactor biosynthesis; biotin biosynthesis; biotin from 7,8-diaminononanoate: step 2/2. Its function is as follows. Catalyzes the conversion of dethiobiotin (DTB) to biotin by the insertion of a sulfur atom into dethiobiotin via a radical-based mechanism. The polypeptide is Biotin synthase (Macrococcus caseolyticus (strain JCSC5402) (Macrococcoides caseolyticum)).